We begin with the raw amino-acid sequence, 347 residues long: Quinolinate synthase (347 aa).

Iminosuccinate contacts are provided by H47 and S68. A [4Fe-4S] cluster-binding site is contributed by C113. Iminosuccinate contacts are provided by residues 139-141 and S156; that span reads YAN. A [4Fe-4S] cluster-binding site is contributed by C200. Residues 226–228 and T243 contribute to the iminosuccinate site; that span reads HPE. C297 contributes to the [4Fe-4S] cluster binding site.

This sequence belongs to the quinolinate synthase family. Type 1 subfamily. The cofactor is [4Fe-4S] cluster.

It is found in the cytoplasm. It carries out the reaction iminosuccinate + dihydroxyacetone phosphate = quinolinate + phosphate + 2 H2O + H(+). It participates in cofactor biosynthesis; NAD(+) biosynthesis; quinolinate from iminoaspartate: step 1/1. Its function is as follows. Catalyzes the condensation of iminoaspartate with dihydroxyacetone phosphate to form quinolinate. The chain is Quinolinate synthase from Shigella flexneri serotype 5b (strain 8401).